Reading from the N-terminus, the 111-residue chain is Protein BEX3 (111 aa).

Positions 1–63 (MANIHQENEE…RQINDGMGGD (63 aa)) are disordered. Positions 68-93 (EIFMEEMREIRRKLRELQLRNCLRIL) are interaction with p75NTR/NGFR. Residues 68 to 111 (EIFMEEMREIRRKLRELQLRNCLRILMGELSNHHDHHDEFCLMP) are interaction with 14-3-3 epsilon. Residues 77–87 (IRRKLRELQLR) carry the Nuclear export signal motif. Residues 100 to 104 (HHDHH) are his cluster. Cys-108 contributes to the Zn(2+) binding site.

The protein belongs to the BEX family. As to quaternary structure, self-associates. Binds to the DEATH domain of p75NTR/NGFR. Interacts with 14-3-3 epsilon (YWHAE). Interacts with DIABLO/SMAC. Post-translationally, ubiquitinated. Degraded by the proteasome. In terms of tissue distribution, found in ovarian granulosa cells, testis, prostate and seminal vesicle tissue. High levels also detected in liver.

The protein localises to the nucleus. The protein resides in the cytoplasm. It localises to the cytosol. Functionally, may be a signaling adapter molecule involved in NGFR/p75NTR-mediated apoptosis induced by NGF. Plays a role in zinc-triggered neuronal death. In absence of reductive stress, acts as a pseudosubstrate for the CRL2(FEM1B) complex: associates with FEM1B via zinc, thereby preventing association between FEM1B and its substrates. This chain is Protein BEX3, found in Homo sapiens (Human).